Consider the following 325-residue polypeptide: Elongation factor Ts, mitochondrial (325 aa).

The N-terminal 45 residues, 1-45 (MSLLRSLRVFLVARTGSYPAGSLLRQSPQPRHTFYAGPRLSASAS), are a transit peptide targeting the mitochondrion. An N6-succinyllysine mark is found at lysine 76, lysine 133, and lysine 192. A Phosphoserine modification is found at serine 270. At threonine 324 the chain carries Phosphothreonine.

This sequence belongs to the EF-Ts family. In terms of tissue distribution, expressed in all tissues, with the highest levels of expression in skeletal muscle, liver and kidney.

The protein resides in the mitochondrion. In terms of biological role, associates with the EF-Tu.GDP complex and induces the exchange of GDP to GTP. It remains bound to the aminoacyl-tRNA.EF-Tu.GTP complex up to the GTP hydrolysis stage on the ribosome. The polypeptide is Elongation factor Ts, mitochondrial (Homo sapiens (Human)).